The primary structure comprises 362 residues: DNA replication and repair protein RecF (362 aa).

An ATP-binding site is contributed by 31 to 38 (GDNAAGKT).

This sequence belongs to the RecF family.

It is found in the cytoplasm. In terms of biological role, the RecF protein is involved in DNA metabolism; it is required for DNA replication and normal SOS inducibility. RecF binds preferentially to single-stranded, linear DNA. It also seems to bind ATP. The chain is DNA replication and repair protein RecF from Hydrogenovibrio crunogenus (strain DSM 25203 / XCL-2) (Thiomicrospira crunogena).